We begin with the raw amino-acid sequence, 397 residues long: GDNF family receptor alpha-3 (397 aa).

A signal peptide spans M1–G28. Cysteines 48 and 54 form a disulfide. 2 N-linked (GlcNAc...) asparagine glycosylation sites follow: N92 and N145. 10 cysteine pairs are disulfide-bonded: C159–C215, C166–C172, C183–C193, C188–C236, C217–C224, C245–C313, C252–C258, C269–C285, C278–C337, and C315–C325. N306 carries N-linked (GlcNAc...) asparagine glycosylation. A lipid anchor (GPI-anchor amidated asparagine) is attached at N371. Positions P372–W397 are cleaved as a propeptide — removed in mature form.

Belongs to the GDNFR family. Interacts with ARTN ligand and RET: forms a 2:2:2 ternary complex composed of ARTN ligand, GFRA3 and RET receptor. Interacts with SORL1.

The protein resides in the cell membrane. Its function is as follows. Receptor for artemin (ARTN), a growth factor that supports the survival of sensory and sympathetic peripheral neurons. ARTN-binding leads to autophosphorylation and activation of the RET receptor. In Mus musculus (Mouse), this protein is GDNF family receptor alpha-3 (Gfra3).